The primary structure comprises 199 residues: Inactive glutathione S-transferase D3 (199 aa).

The region spanning 1 to 64 (MVGKALGLEF…YLVEKYGKDD (64 aa)) is the GST N-terminal domain. Residues 34 to 36 (HSI) and 48 to 50 (ESR) contribute to the glutathione site. Residues 70–199 (DIQKQAVINQ…RIEEKQNAAK (130 aa)) form the GST C-terminal domain.

This sequence belongs to the GST superfamily. Delta family. In terms of assembly, homodimer.

Its function is as follows. Has no glutathione S-transferase activity. This chain is Inactive glutathione S-transferase D3, found in Drosophila melanogaster (Fruit fly).